Here is a 329-residue protein sequence, read N- to C-terminus: Protein mlo2 (329 aa).

Residues 33–104 (DTCTYSMGYL…HSIPCNLRKS (72 aa)) form a UBR-type zinc finger. A PHD-type zinc finger spans residues 120 to 179 (GRFCICDTVYNPETEEGTMFQCILCEDWFHEKCLQKTNKGIAIPDAETFEWLVCSECSEK).

This sequence belongs to the UBR7 family.

Functionally, not known, interfere with mitotic chromosome segregation when overexpressed. The sequence is that of Protein mlo2 (mlo2) from Schizosaccharomyces pombe (strain 972 / ATCC 24843) (Fission yeast).